The chain runs to 311 residues: Putative prophage capsid protein YqbE (311 aa).

The protein belongs to the encapsulin family. Family 3 subfamily.

Possibly a prophage capsid protein. In Bacillus subtilis (strain 168), this protein is Putative prophage capsid protein YqbE (yqbE).